A 431-amino-acid chain; its full sequence is Glucose-1-phosphate adenylyltransferase (431 aa).

Residue Lys39 participates in beta-D-fructose 1,6-bisphosphate binding. Arg40, His46, and Arg52 together coordinate AMP. Alpha-D-glucose 1-phosphate contacts are provided by residues Tyr114, Gly179, 194–195, and Ser212; that span reads EK. AMP contacts are provided by Glu370 and Arg386. Residues 419–423 and 429–431 each bind beta-D-fructose 1,6-bisphosphate; these read REMLR and QER.

Belongs to the bacterial/plant glucose-1-phosphate adenylyltransferase family. In terms of assembly, homotetramer.

The enzyme catalyses alpha-D-glucose 1-phosphate + ATP + H(+) = ADP-alpha-D-glucose + diphosphate. The protein operates within glycan biosynthesis; glycogen biosynthesis. Allosterically activated by fructose-1,6-bisphosphate (F16BP) and inhibited by AMP. Functionally, involved in the biosynthesis of ADP-glucose, a building block required for the elongation reactions to produce glycogen. Catalyzes the reaction between ATP and alpha-D-glucose 1-phosphate (G1P) to produce pyrophosphate and ADP-Glc. In Salmonella typhi, this protein is Glucose-1-phosphate adenylyltransferase.